Consider the following 220-residue polypeptide: Guanylate kinase (220 aa).

The Guanylate kinase-like domain occupies 16-195; sequence GLMFVLSSPS…AFESVKAILR (180 aa). 23 to 30 provides a ligand contact to ATP; that stretch reads SPSGAGKT.

This sequence belongs to the guanylate kinase family.

Its subcellular location is the cytoplasm. It carries out the reaction GMP + ATP = GDP + ADP. Its function is as follows. Essential for recycling GMP and indirectly, cGMP. The polypeptide is Guanylate kinase (Rhodopseudomonas palustris (strain HaA2)).